A 223-amino-acid polypeptide reads, in one-letter code: Large ribosomal subunit protein uL6c (223 aa).

A chloroplast-targeting transit peptide spans 1–41 (MASSLVSSFQPRSAFLGDRNVFKVSSTPFAQVGYSSKTIEC).

This sequence belongs to the universal ribosomal protein uL6 family. As to quaternary structure, part of the 50S ribosomal subunit.

The protein localises to the plastid. The protein resides in the chloroplast. In terms of biological role, this protein binds directly to 23S ribosomal RNA and is located at the aminoacyl-tRNA binding site of the peptidyltransferase center. The protein is Large ribosomal subunit protein uL6c (RPL6) of Arabidopsis thaliana (Mouse-ear cress).